We begin with the raw amino-acid sequence, 287 residues long: Probable glucose uptake protein GlcU (287 aa).

The next 9 helical transmembrane spans lie at 7–29 (LIAL…VGGG), 34–56 (IRGT…FAKF), 58–75 (NPTV…WAFG), 114–136 (WSSM…GVAL), 156–178 (MGIL…IFGV), 183–202 (ALFF…SMNH), 209–228 (TALN…FMFY), 233–255 (VGVA…GGIF), and 267–286 (TGIW…LGNL).

Belongs to the GRP transporter (TC 2.A.7.5) family.

The protein resides in the cell membrane. Involved in the uptake of glucose. The sequence is that of Probable glucose uptake protein GlcU (glcU) from Staphylococcus aureus (strain MRSA252).